A 127-amino-acid chain; its full sequence is Small ribosomal subunit protein bS6 (127 aa).

It belongs to the bacterial ribosomal protein bS6 family.

Its function is as follows. Binds together with bS18 to 16S ribosomal RNA. This is Small ribosomal subunit protein bS6 from Buchnera aphidicola subsp. Cinara cedri (strain Cc).